We begin with the raw amino-acid sequence, 85 residues long: Small ribosomal subunit protein bS16c (85 aa).

The protein belongs to the bacterial ribosomal protein bS16 family.

The protein resides in the plastid. Its subcellular location is the chloroplast. This is Small ribosomal subunit protein bS16c from Cucumis sativus (Cucumber).